The sequence spans 174 residues: Actin-related protein 2/3 complex subunit 3 (174 aa).

This sequence belongs to the ARPC3 family. Component of the Arp2/3 complex composed of arpB/Arp2, arpC/Arp3, arcA/p41-arc, arcB/p34-arc, arcC/p21-arc, arcD/p20-arc and arcE/p16-arc. Interacts with carmil (via the region between the LRR domain and COOH-terminal proline-rich domain); carmil is required for Arp2/3-dependent actin nucleation. Arp2/3 complex, MyoB, MyoC, and the alpha and beta subunits of capping protein all form a larger complex with carmil.

The protein resides in the cytoplasm. It is found in the cytoskeleton. Its subcellular location is the cytosol. The protein localises to the cell cortex. It localises to the cell projection. The protein resides in the pseudopodium. Its function is as follows. Functions as a component of the Arp2/3 complex which is involved in regulation of actin polymerization and together with an activating nucleation-promoting factor (NPF) mediates the formation of branched actin networks. Seems to contact the pointed end of the daughter actin filament. The Arp2/3 complex is involved in organizing the actin system in cell motility and chemotaxis, in phagocytosis and macropinocytosis, at late steps of endosome processing, and in mitosis. In concert with a group of other proteins, the Arp2/3 complex plays a general role in the rapid activation and adaptation of the actin system to its multiple functions. This is Actin-related protein 2/3 complex subunit 3 (arcC) from Dictyostelium discoideum (Social amoeba).